A 483-amino-acid polypeptide reads, in one-letter code: PAT complex subunit CCDC47 (483 aa).

An N-terminal signal peptide occupies residues 1–20 (MKAFYAFCVVLLVFGSVSEA). Residues 21-135 (KFDDFEDEED…PAHLQNSWES (115 aa)) are Cytoplasmic-facing. A disordered region spans residues 46 to 119 (MEDSVTESPQ…DTSSNKNKDP (74 aa)). Over residues 60–104 (TEDDEDEATVELEGQDESQEGDFEDADTQEGDTESEPYDDEEFEG) the composition is skewed to acidic residues. Basic and acidic residues predominate over residues 105-118 (YEDKPDTSSNKNKD). The chain crosses the membrane as a helical span at residues 136–156 (YYLEILMVTGLLAYIMNYIIG). Over 157–483 (KNKNSRLAQA…KMKQIKVKAM (327 aa)) the chain is Lumenal. Asn-178 is a glycosylation site (N-linked (GlcNAc...) asparagine). Residues 424 to 483 (QRQEAAQSRREEKKRAEKERIMNEEDPEKQRRLEEAALRREQKKLEKKQMKMKQIKVKAM) form a disordered region. Positions 430 to 472 (QSRREEKKRAEKERIMNEEDPEKQRRLEEAALRREQKKLEKKQ) are enriched in basic and acidic residues. A coiled-coil region spans residues 450-483 (PEKQRRLEEAALRREQKKLEKKQMKMKQIKVKAM). Residues 473-483 (MKMKQIKVKAM) are compositionally biased toward basic residues.

The protein belongs to the CCDC47 family. In terms of assembly, component of the PAT complex, composed of WDR83OS/Asterix and CCDC47. The PAT complex is part of the multi-pass translocon (MPT) complex, composed of three subcomplexes, the GEL complex (composed of RAB5IF/OPTI and TMCO1), the BOS complex (composed of NCLN/Nicalin, NOMO1 and TMEM147) and the PAT complex (composed of WDR83OS/Asterix and CCDC47). The MPT complex associates with the SEC61 complex. Interacts with VCP, HSPA5, DERL1, DERL2 and SELENOS. In the embryo, expressed in the endodermal layer of the yolk sac and in the small intestine.

It localises to the endoplasmic reticulum membrane. The protein resides in the rough endoplasmic reticulum membrane. Functionally, component of the multi-pass translocon (MPT) complex that mediates insertion of multi-pass membrane proteins into the lipid bilayer of membranes. The MPT complex takes over after the SEC61 complex: following membrane insertion of the first few transmembrane segments of proteins by the SEC61 complex, the MPT complex occludes the lateral gate of the SEC61 complex to promote insertion of subsequent transmembrane regions. Within the MPT complex, the PAT subcomplex sequesters any highly polar regions in the transmembrane domains away from the non-polar membrane environment until they can be buried in the interior of the fully assembled protein. Within the PAT subcomplex, CCDC47 occludes the lateral gate of the SEC61 complex. Involved in the regulation of calcium ion homeostasis in the ER. Required for proper protein degradation via the ERAD (ER-associated degradation) pathway. Has an essential role in the maintenance of ER organization during embryogenesis. This chain is PAT complex subunit CCDC47, found in Mus musculus (Mouse).